A 394-amino-acid chain; its full sequence is Cytohesin-4 (394 aa).

Residues S12 to L65 are a coiled coil. The region spanning E54–E241 is the SEC7 domain. The PH domain occupies N259–T375. A 1,2-diacyl-sn-glycero-3-phospho-(1D-myo-inositol-3,4,5-trisphosphate) is bound by residues K268–T275, R279, Y290, and R300. The tract at residues R386–Q394 is C-terminal autoinhibitory region.

As to expression, expressed predominantly in peripheral blood leukocytes.

It is found in the cell membrane. Its function is as follows. Promotes guanine-nucleotide exchange on ARF1 and ARF5. Promotes the activation of ARF factors through replacement of GDP with GTP. The polypeptide is Cytohesin-4 (CYTH4) (Homo sapiens (Human)).